The following is a 357-amino-acid chain: Protein RecA (357 aa).

78 to 85 is an ATP binding site; it reads GPESSGKT.

It belongs to the RecA family.

Its subcellular location is the cytoplasm. In terms of biological role, can catalyze the hydrolysis of ATP in the presence of single-stranded DNA, the ATP-dependent uptake of single-stranded DNA by duplex DNA, and the ATP-dependent hybridization of homologous single-stranded DNAs. It interacts with LexA causing its activation and leading to its autocatalytic cleavage. This Cereibacter sphaeroides (strain ATCC 17029 / ATH 2.4.9) (Rhodobacter sphaeroides) protein is Protein RecA.